The sequence spans 431 residues: Transcription factor Sp7 (431 aa).

The interval 30–56 (SSPLRDSTTLGKAGTKKPYSVGSDLSA) is disordered. Residues Lys41 and Lys45 each carry the N6-propionyllysine modification. Lys58 is covalently cross-linked (Glycyl lysine isopeptide (Lys-Gly) (interchain with G-Cter in ubiquitin)). 2 disordered regions span residues 71–115 (TNGL…VPKG) and 154–260 (TPTP…SGGY). The 9aaTAD signature appears at 156 to 164 (TPWWDMHPG). The span at 166 to 178 (NWLGGGQGQGDGL) shows a compositional bias: gly residues. Lys230 participates in a covalent cross-link: Glycyl lysine isopeptide (Lys-Gly) (interchain with G-Cter in ubiquitin). C2H2-type zinc fingers lie at residues 294 to 318 (HSCH…LRWH), 324 to 348 (FVCN…VRTH), and 354 to 376 (FTCL…QRTH). 2 positions are modified to N6-propionyllysine: Lys361 and Lys371. The interval 367-431 (DHLSKHQRTH…SPEQSNLLEI (65 aa)) is disordered. Residues 403–412 (SQTPRPSASP) show a composition bias toward polar residues.

Belongs to the Sp1 C2H2-type zinc-finger protein family. Interacts with RIOX1; the interaction is direct and inhibits transcription activator activity. In terms of processing, ubiquitination at leads to proteasomal degradation. SP7 is a short-live protein with an endogenous half-life of approximately 12 hours. Post-translationally, propionylated. Depropionylation at Lys-371 by SIRT7 activates transcription factor activity and positively regulates bone formation by osteoblasts. Restricted to bone-derived cell.

It is found in the nucleus. Its function is as follows. Transcriptional activator essential for osteoblast differentiation. Binds to SP1 and EKLF consensus sequences and to other G/C-rich sequences. This chain is Transcription factor Sp7 (SP7), found in Homo sapiens (Human).